We begin with the raw amino-acid sequence, 825 residues long: Glycerol-3-phosphate acyltransferase (825 aa).

Residues 306–311 carry the HXXXXD motif motif; the sequence is CHRSHM. The segment at 802-825 is disordered; the sequence is SASSSTEMEASTSSSQTAEETTQG.

The protein belongs to the GPAT/DAPAT family.

The protein localises to the cell inner membrane. It catalyses the reaction sn-glycerol 3-phosphate + an acyl-CoA = a 1-acyl-sn-glycero-3-phosphate + CoA. The protein operates within phospholipid metabolism; CDP-diacylglycerol biosynthesis; CDP-diacylglycerol from sn-glycerol 3-phosphate: step 1/3. The protein is Glycerol-3-phosphate acyltransferase of Pectobacterium atrosepticum (strain SCRI 1043 / ATCC BAA-672) (Erwinia carotovora subsp. atroseptica).